The chain runs to 567 residues: Oxygen-dependent choline dehydrogenase (567 aa).

Residue 4–33 (DYIIIGAGSAGNVLAARLTEDADVTVLLLE) participates in FAD binding. His-473 acts as the Proton acceptor in catalysis.

It belongs to the GMC oxidoreductase family. FAD serves as cofactor.

It catalyses the reaction choline + A = betaine aldehyde + AH2. It carries out the reaction betaine aldehyde + NAD(+) + H2O = glycine betaine + NADH + 2 H(+). The protein operates within amine and polyamine biosynthesis; betaine biosynthesis via choline pathway; betaine aldehyde from choline (cytochrome c reductase route): step 1/1. Its function is as follows. Involved in the biosynthesis of the osmoprotectant glycine betaine. Catalyzes the oxidation of choline to betaine aldehyde and betaine aldehyde to glycine betaine at the same rate. This Yersinia pseudotuberculosis serotype O:1b (strain IP 31758) protein is Oxygen-dependent choline dehydrogenase.